The primary structure comprises 272 residues: Putative pyruvate, phosphate dikinase regulatory protein (272 aa).

154–161 (GVSRTSKS) lines the ADP pocket.

This sequence belongs to the pyruvate, phosphate/water dikinase regulatory protein family. PDRP subfamily.

It catalyses the reaction N(tele)-phospho-L-histidyl/L-threonyl-[pyruvate, phosphate dikinase] + ADP = N(tele)-phospho-L-histidyl/O-phospho-L-threonyl-[pyruvate, phosphate dikinase] + AMP + H(+). It carries out the reaction N(tele)-phospho-L-histidyl/O-phospho-L-threonyl-[pyruvate, phosphate dikinase] + phosphate + H(+) = N(tele)-phospho-L-histidyl/L-threonyl-[pyruvate, phosphate dikinase] + diphosphate. In terms of biological role, bifunctional serine/threonine kinase and phosphorylase involved in the regulation of the pyruvate, phosphate dikinase (PPDK) by catalyzing its phosphorylation/dephosphorylation. In Wolbachia sp. subsp. Brugia malayi (strain TRS), this protein is Putative pyruvate, phosphate dikinase regulatory protein.